Consider the following 222-residue polypeptide: MNSSVLGKPLLGKGMSESLTGTLDAPFPEYQKPPADPMSVLHNWLERARRVGIREPRALALATADSQGRPSTRIVVISEISDTGVLFSTHAGSQKGRELTENPWASGTLYWRETSQQIILNGQAVRMPDAKADEAWLKRPYATHPMSSVSRQSEELKDVQAMRNAARELAEVQGPLPRPEGYCVFELRLESLEFWGNGEERLHERLRYDRSAEGWKHRRLQP.

Ser18 contributes to the substrate binding site. FMN contacts are provided by residues 73–76 (RIVV) and 88–89 (ST). Substrate is bound at residue His90. Residues 94 to 95 (QK) and Gln117 each bind FMN. Residues Arg139 and Ser147 each contribute to the substrate site. Residues 152 to 153 (QS) and Arg205 contribute to the FMN site.

This sequence belongs to the pyridoxamine 5'-phosphate oxidase family. Requires FMN as cofactor.

It carries out the reaction (1R,6R)-1,4,5,5a,6,9-hexahydrophenazine-1,6-dicarboxylate + O2 = (1R,10aS)-1,4,10,10a-tetrahydrophenazine-1,6-dicarboxylate + H2O2. The catalysed reaction is (1R,10aS)-1,4,10,10a-tetrahydrophenazine-1,6-dicarboxylate + O2 = (5aS)-5,5a-dihydrophenazine-1,6-dicarboxylate + H2O2. The enzyme catalyses (1R,10aS)-1,4,10,10a-tetrahydrophenazine-1-carboxylate + O2 = (10aS)-10,10a-dihydrophenazine-1-carboxylate + H2O2. It catalyses the reaction (1R)-1,4,5,10-tetrahydrophenazine-1-carboxylate + O2 = (10aS)-10,10a-dihydrophenazine-1-carboxylate + H2O2. It participates in antibiotic biosynthesis; phenazine biosynthesis. Involved in the biosynthesis of the antibiotic phenazine, a nitrogen-containing heterocyclic molecule having important roles in virulence, competition and biological control. Catalyzes several oxidations in the terminal steps of core phenazine biosynthesis. It oxidizes both hexahydrophenazine-1,6-dicarboxylic acid (HHPDC) and tetrahydrophenazine-1-carboxylic acid (THPCA) and thereby contributes to the generation of both phenazine-1,6-dicarboxylic acid (PDC) and phenazine-1-carboxylic acid (PCA). This chain is Dihydrophenazinedicarboxylate synthase, found in Pseudomonas chlororaphis (Pseudomonas aureofaciens).